We begin with the raw amino-acid sequence, 300 residues long: ESX-5 secretion-associated protein EspG5 (300 aa).

This sequence belongs to the EspG family. In terms of assembly, interacts specifically with ESX-5-dependent PE/PPE proteins. Binds PPE33 and PPE18. Does not interact with EsxN. Monomer in solution.

It is found in the cytoplasm. Functionally, specific chaperone for cognate PE/PPE proteins. Plays an important role in preventing aggregation of PE/PPE dimers. Required for LipY and PE31/PPE18 secretion. This Mycobacterium marinum (strain ATCC BAA-535 / M) protein is ESX-5 secretion-associated protein EspG5.